The primary structure comprises 340 residues: uncharacterized protein (340 aa).

This is an uncharacterized protein from Methanocaldococcus jannaschii (strain ATCC 43067 / DSM 2661 / JAL-1 / JCM 10045 / NBRC 100440) (Methanococcus jannaschii).